Reading from the N-terminus, the 324-residue chain is MKPLSRRQEQVLQATVHHYVDTMEPVGSRTLVQRFSMPASSATIRSAMGALEQRGLLTQPHTSSGRIPSALGYRHYVDCLLPEPAATVLHLERELTGLSLGWAALDDLLLQLARRLTDFTGLMSLITRPTRTQPQLAAIRLVQSGERLLVMLVENSGHASHLNLRLPHATSDELDAIERWAEQQLRGGALNWEKLPTQLQRSGDVLRHALEHPSISAEPTTLVHGLSRLVAEPEFQSAQDLGPLLQLIDDEPMALISPGAEARVLIGQEHPQSALEACSVVQAPYRCGQEGTGHIALIGPMRMAYATACSAVERVARHLELLLS.

This sequence belongs to the HrcA family.

Negative regulator of class I heat shock genes (grpE-dnaK-dnaJ and groELS operons). Prevents heat-shock induction of these operons. The polypeptide is Heat-inducible transcription repressor HrcA (Synechococcus sp. (strain CC9902)).